A 399-amino-acid polypeptide reads, in one-letter code: Putative gustatory receptor 59e (399 aa).

At 1–33 (MDSSYWENLLLTINRFLGVYPSGRVGVLRWLHT) the chain is on the cytoplasmic side. A helical transmembrane segment spans residues 34-54 (LWSLFLLMYIWTGSIVKCLEF). Over 55–65 (TVEIPTIEKLL) the chain is Extracellular. Residues 66–86 (YLMEFPGNMATIAILVYYAVL) form a helical membrane-spanning segment. At 87–120 (NRPLAHGAELQIERIITGLKGKAKRLVYKRHGQR) the chain is on the cytoplasmic side. The helical transmembrane segment at 121-141 (TLHLMATTLVFHGLCVLVDVV) threads the bilayer. Residues 142-206 (NYDFEFWTTW…RPPQGSTKLD (65 aa)) are Extracellular-facing. Residues 207 to 227 (ACYESAFAVLVDAGGGSALMI) traverse the membrane as a helical segment. The Cytoplasmic portion of the chain corresponds to 228 to 250 (EEMRYTCNLIEQVHSQFLLRFGL). A helical membrane pass occupies residues 251-271 (YLVLNLLNSLVSICVELYLIF). The Extracellular segment spans residues 272–282 (NFFETPLWEES). A helical transmembrane segment spans residues 283-303 (VLLVYRLLWLAMHGGRIWFIL). Residues 304-361 (SVNEQILEQKCNLCQLLNELEVCSSRLQRTINRFLLQLQRSIDQPLEACGIVTLDTRS) lie on the Cytoplasmic side of the membrane. The chain crosses the membrane as a helical span at residues 362–382 (LGGFIGVLMAIVIFLIQIGLG). N-linked (GlcNAc...) asparagine glycans are attached at residues N383 and N392. The Extracellular segment spans residues 383-399 (NKSLMGVALNRSNWVYV).

Belongs to the insect chemoreceptor superfamily. Gustatory receptor (GR) family. Gr10a subfamily. As to expression, expressed in the adult labellar chemosensory neurons. In larvae, is expressed in neurons of the terminal external chemosensory organ.

The protein resides in the cell membrane. Functionally, probable gustatory receptor which mediates acceptance or avoidance behavior, depending on its substrates. This Drosophila melanogaster (Fruit fly) protein is Putative gustatory receptor 59e (Gr59e).